A 235-amino-acid polypeptide reads, in one-letter code: Aspartate/glutamate leucyltransferase (235 aa).

It belongs to the R-transferase family. Bpt subfamily.

It is found in the cytoplasm. It catalyses the reaction N-terminal L-glutamyl-[protein] + L-leucyl-tRNA(Leu) = N-terminal L-leucyl-L-glutamyl-[protein] + tRNA(Leu) + H(+). The enzyme catalyses N-terminal L-aspartyl-[protein] + L-leucyl-tRNA(Leu) = N-terminal L-leucyl-L-aspartyl-[protein] + tRNA(Leu) + H(+). In terms of biological role, functions in the N-end rule pathway of protein degradation where it conjugates Leu from its aminoacyl-tRNA to the N-termini of proteins containing an N-terminal aspartate or glutamate. The polypeptide is Aspartate/glutamate leucyltransferase (Pseudomonas fluorescens (strain Pf0-1)).